Reading from the N-terminus, the 363-residue chain is MLDNMQFHSPAPEHPQLNGGINKIPASHKIGYKLNQQVQRLAVVRNNIEERLNSMESSHGQISDSSVVRAIDASIDDFLIPSPPLSPKLRQCPIISQPQLVNVESDHRELIMLTPVWEAGLNSQKYNHNTRNFLSQYSFFRDMKTTKRIPNKENRKLKVVKSVVNSEALPKRRRYDRKIKRRSRELYEDDGNRSENYDEESAQEVPVRSVTPIRQVKRSLHTISSPLASQGVVNNVPKYIPSMSWEKLPDYSPPLHTLPNSNNKVLKVEWKGSPMDLNHDPLKQRLHPAELVLAQILRLPCDLYLDSKRRFFLEKVHRFKKGLPFRRTDAQKACRIDVNKASRLFAAFEKVGWLQDKHFEKYL.

Disordered stretches follow at residues 1–22 (MLDN…GGIN) and 186–208 (LYED…VPVR). The segment covering 186–196 (LYEDDGNRSEN) has biased composition (basic and acidic residues). The 98-residue stretch at 266–363 (LKVEWKGSPM…LQDKHFEKYL (98 aa)) folds into the SWIRM domain.

This Saccharomyces cerevisiae (strain ATCC 204508 / S288c) (Baker's yeast) protein is SWIRM domain-containing protein YOR338W.